A 117-amino-acid polypeptide reads, in one-letter code: MAAPLGTGARAEDSGQEKQDSQEKETVIPERAEEAKLKAKYPNLGQKPGGSDFLMKRLQKGQKYFDSGDYNMAKAKMKNKQLPTAGPDKNLVTGDHIPKPQDLPQRKSSLVASKLAG.

The segment at 1–53 is disordered; sequence MAAPLGTGARAEDSGQEKQDSQEKETVIPERAEEAKLKAKYPNLGQKPGGSDF. Over residues 10–37 the composition is skewed to basic and acidic residues; the sequence is RAEDSGQEKQDSQEKETVIPERAEEAKL. At serine 67 the chain carries Phosphoserine; by GWL. The tract at residues 76 to 117 is disordered; the sequence is KMKNKQLPTAGPDKNLVTGDHIPKPQDLPQRKSSLVASKLAG.

Belongs to the endosulfine family. Phosphorylation at Ser-67 by GWL during mitosis is essential for interaction with PPP2R2D (PR55-delta) and subsequent inactivation of PP2A.

It is found in the cytoplasm. Its function is as follows. Protein phosphatase inhibitor that specifically inhibits protein phosphatase 2A (PP2A) during mitosis. When phosphorylated at Ser-67 during mitosis, specifically interacts with PPP2R2D (PR55-delta) and inhibits its activity, leading to inactivation of PP2A, an essential condition to keep cyclin-B1-CDK1 activity high during M phase. In Gallus gallus (Chicken), this protein is Alpha-endosulfine (ENSA).